We begin with the raw amino-acid sequence, 298 residues long: MTDSHYIGRFAPSPSGELHFGSLIAALGSYLQARAQRGVWRVRIEDIDPPREVPGAAATILRQLEHYGLHWDGEVLWQSQRHEAYREALAWLHEQGLSYYCTCPRSRIQRLGGIYDGHCRTLCHGPENAAVRIKQQHPVMHFHDALRGDIQADPQLASEDFIIHRRDGLFAYNLAVVVDDHFQGVTEIVRGADLIEPTVRQLSLYKQFGWRAPGYVHLPLALNEQGAKLSKQNHAPALATGDPRPVLVQALRFLGQRDVVAWQEMSVEELLRFAVAHWRLTAVPTSANVNPAFSNASR.

Residues 9 to 13 (RFAPS) and E45 each bind L-glutamate. Positions 12-22 (PSPSGELHFGS) match the 'HIGH' region motif. Zn(2+) is bound by residues C101, C103, Y115, and C119. Y172 and R190 together coordinate L-glutamate. The 'KMSKS' region motif lies at 228–232 (KLSKQ). K231 contacts ATP.

Belongs to the class-I aminoacyl-tRNA synthetase family. GluQ subfamily. The cofactor is Zn(2+).

In terms of biological role, catalyzes the tRNA-independent activation of glutamate in presence of ATP and the subsequent transfer of glutamate onto a tRNA(Asp). Glutamate is transferred on the 2-amino-5-(4,5-dihydroxy-2-cyclopenten-1-yl) moiety of the queuosine in the wobble position of the QUC anticodon. This chain is Glutamyl-Q tRNA(Asp) synthetase, found in Salmonella typhi.